Reading from the N-terminus, the 573-residue chain is PCNA-interacting partner (573 aa).

2 disordered regions span residues 470-505 (VGKA…SKGK) and 531-560 (PKVP…RGKL).

The protein belongs to the PARI family. As to quaternary structure, interacts with RAD51 and PCNA. Interacts with PARP1. Interacts with TASOR. In terms of tissue distribution, expressed in the ovary, Sertoli cells of the testis and in granular cells within the cerebellum.

The protein localises to the cytoplasm. The protein resides in the nucleus. Functionally, required to suppress inappropriate homologous recombination, thereby playing a central role DNA repair and in the maintenance of genomic stability. Antagonizes homologous recombination by interfering with the formation of the RAD51-DNA homologous recombination structure. Binds single-strand DNA and poly(A) homopolymers. Positively regulate the poly(ADP-ribosyl)ation activity of PARP1; however such function may be indirect. The polypeptide is PCNA-interacting partner (Parpbp) (Mus musculus (Mouse)).